The primary structure comprises 464 residues: Glycine receptor subunit alpha-3 (464 aa).

Residues 1-33 (MAHVRHFRTLVSGFYFWEAALLLSLVATKETNS) form the signal peptide. Residues 34-255 (ARSRSAPMSP…RFHLERQMGY (222 aa)) lie on the Extracellular side of the membrane. Asparagine 71 is a glycosylation site (N-linked (GlcNAc...) asparagine). Cysteine 171 and cysteine 185 are disulfide-bonded. Zn(2+) contacts are provided by glutamate 225 and aspartate 227. Cysteine 231 and cysteine 242 form a disulfide bridge. 235–240 (YNTGKF) contributes to the strychnine binding site. Zn(2+) is bound at residue histidine 248. A helical transmembrane segment spans residues 256 to 277 (YLIQMYIPSLLIVILSWVSFWI). Residues 278–282 (NMDAA) are Cytoplasmic-facing. The helical transmembrane segment at 283 to 303 (PARVALGITTVLTMTTQSSGS) threads the bilayer. Residues 304–314 (RASLPKVSYVK) are Extracellular-facing. Residues 315-335 (AIDIWMAVCLLFVFSALLEYA) form a helical membrane-spanning segment. Topologically, residues 336 to 430 (AVNFVSRQHK…FIDRAKKIDT (95 aa)) are cytoplasmic. The residue at position 370 (serine 370) is a Phosphoserine. Serine 379 is subject to Phosphoserine; by PKA. The helical transmembrane segment at 431-451 (ISRACFPLAFLIFNIFYWVIY) threads the bilayer. Topologically, residues 452–464 (KILRHEDIHQQQD) are extracellular.

This sequence belongs to the ligand-gated ion channel (TC 1.A.9) family. Glycine receptor (TC 1.A.9.3) subfamily. GLRA3 sub-subfamily. Homopentamer (in vitro). Heteropentamer composed of GLRA3 and GLRB. Both homopentamers and heteropentamers form functional ion channels, but their characteristics are subtly different. Post-translationally, phosphorylated by PKA; this causes down-regulation of channel activity. Dephosphorylated in response to activation of HTR1A signaling; this increases channel activity. Detected in brainstem, also in neurons that control rhythmic breathing. Detected in superficial laminae of the dorsal horn of the thoracic spinal cord. Detected in dentate gyrus in hippocampus, especially in stratum granulare. Detected in the inner plexiform layer in the retina (at protein level). Detected in midbrain, thalamus, brain cortex, hippocampus, and at lower levels in cerebellum.

The protein localises to the postsynaptic cell membrane. Its subcellular location is the synapse. It is found in the perikaryon. It localises to the cell projection. The protein resides in the dendrite. The protein localises to the cell membrane. The enzyme catalyses chloride(in) = chloride(out). Its activity is regulated as follows. Inhibited by prostaglandin E2, probably via PKA-mediated phosphorylation at Ser-379. Functionally, glycine receptors are ligand-gated chloride channels. Channel opening is triggered by extracellular glycine. Channel characteristics depend on the subunit composition; heteropentameric channels display faster channel closure. Plays an important role in the down-regulation of neuronal excitability. Contributes to the generation of inhibitory postsynaptic currents. Contributes to increased pain perception in response to increased prostaglandin E2 levels. Plays a role in the regulation of breathing rhythm, especially of the duration of the postinspiratory phase. Plays a role in cellular responses to ethanol. The sequence is that of Glycine receptor subunit alpha-3 (Glra3) from Mus musculus (Mouse).